Consider the following 236-residue polypeptide: Ubiquinone biosynthesis O-methyltransferase (236 aa).

S-adenosyl-L-methionine is bound by residues arginine 36, glycine 60, aspartate 81, and leucine 123.

It belongs to the methyltransferase superfamily. UbiG/COQ3 family.

It carries out the reaction a 3-demethylubiquinol + S-adenosyl-L-methionine = a ubiquinol + S-adenosyl-L-homocysteine + H(+). The catalysed reaction is a 3-(all-trans-polyprenyl)benzene-1,2-diol + S-adenosyl-L-methionine = a 2-methoxy-6-(all-trans-polyprenyl)phenol + S-adenosyl-L-homocysteine + H(+). It functions in the pathway cofactor biosynthesis; ubiquinone biosynthesis. O-methyltransferase that catalyzes the 2 O-methylation steps in the ubiquinone biosynthetic pathway. The chain is Ubiquinone biosynthesis O-methyltransferase from Rickettsia canadensis (strain McKiel).